The chain runs to 828 residues: Periplasmic nitrate reductase (828 aa).

The tat-type signal signal peptide spans 1 to 33; sequence MKLSRRDFMKANAAVAAAAAAGLTIPTVVQAAA. Positions 39 to 95 constitute a 4Fe-4S Mo/W bis-MGD-type domain; the sequence is IKWDKAPCRFCGTGCGVLVGTQNGRIVASQGDPEAAVNRGLSCIKGYFLPKIMYGKD. [4Fe-4S] cluster is bound by residues cysteine 46, cysteine 49, cysteine 53, and cysteine 81. Mo-bis(molybdopterin guanine dinucleotide)-binding positions include lysine 83, glutamine 150, asparagine 175, cysteine 179, 212–219, 243–247, 262–264, methionine 372, glutamine 376, asparagine 482, 508–509, lysine 531, aspartate 558, and 718–727; these read WGSNMAEM, STFEH, QTD, SD, and TGRVLEHWHT. Phenylalanine 794 contributes to the substrate binding site. Mo-bis(molybdopterin guanine dinucleotide) is bound by residues asparagine 802 and lysine 819.

Belongs to the prokaryotic molybdopterin-containing oxidoreductase family. NasA/NapA/NarB subfamily. As to quaternary structure, component of the periplasmic nitrate reductase NapAB complex composed of NapA and NapB. Requires [4Fe-4S] cluster as cofactor. The cofactor is Mo-bis(molybdopterin guanine dinucleotide). Post-translationally, predicted to be exported by the Tat system. The position of the signal peptide cleavage has not been experimentally proven.

The protein localises to the periplasm. It catalyses the reaction 2 Fe(II)-[cytochrome] + nitrate + 2 H(+) = 2 Fe(III)-[cytochrome] + nitrite + H2O. Functionally, catalytic subunit of the periplasmic nitrate reductase complex NapAB. Receives electrons from NapB and catalyzes the reduction of nitrate to nitrite. In Serratia proteamaculans (strain 568), this protein is Periplasmic nitrate reductase.